The sequence spans 268 residues: Hemin import ATP-binding protein HmuV (268 aa).

The ABC transporter domain maps to 5 to 241 (LKAEAASFAL…ELIADVFDVA (237 aa)). ATP is bound at residue 37–44 (GPNGAGKS).

This sequence belongs to the ABC transporter superfamily. Heme (hemin) importer (TC 3.A.1.14.5) family. In terms of assembly, the complex is composed of two ATP-binding proteins (HmuV), two transmembrane proteins (HmuU) and a solute-binding protein (HmuT).

It is found in the cell inner membrane. Its function is as follows. Part of the ABC transporter complex HmuTUV involved in hemin import. Responsible for energy coupling to the transport system. The chain is Hemin import ATP-binding protein HmuV from Rhodopseudomonas palustris (strain ATCC BAA-98 / CGA009).